A 360-amino-acid chain; its full sequence is Cytoplasmic envelopment protein 2 (360 aa).

This sequence belongs to the herpesviridae cytoplasmic envelopment protein 2 family. Interacts with cytoplasmic envelopment protein 3 and with the capsid.

It localises to the virion tegument. It is found in the host cytoplasm. The protein localises to the host nucleus. In terms of biological role, plays a critical role in cytoplasmic virus egress. Participates in the final step of tegumentation and envelope acquisition within the host cytoplasm by directly interacting with the capsid. Upon virion binding to target cell, a signaling cascade is triggered to disrupt the interaction with the capsid, thereby preparing capsid uncoating. This is Cytoplasmic envelopment protein 2 (MDV028) from Gallus gallus (Chicken).